The chain runs to 571 residues: Optineurin (571 aa).

Disordered stretches follow at residues 1–32 and 100–144; these read MSHQ…HPNL and LSHE…DQLR. The stretch at 38 to 170 forms a coiled coil; sequence EELLQQMKEL…VSELQLKLNS (133 aa). The interaction with Rab8 stretch occupies residues 58 to 209; sequence MKLNNQAMKG…GPTRTVSIGT (152 aa). Composition is skewed to basic and acidic residues over residues 100–123 and 130–143; these read LSHE…RSSE and RLPR…KDQL. Positions 176–181 match the LIR motif; the sequence is DSFVEI. Serine 177 bears the Phosphoserine; by TBK1 mark. Residues 186 to 197 are compositionally biased toward basic and acidic residues; that stretch reads GEAEGSVKEIKH. 2 disordered regions span residues 186-210 and 255-291; these read GEAE…IGTS and VSDF…TVGS. Serine 198 carries the phosphoserine modification. The span at 201–210 shows a compositional bias: polar residues; that stretch reads PTRTVSIGTS. A coiled-coil region spans residues 233-502; it reads CLREGNQKVE…LLKENDAFED (270 aa). 2 stretches are compositionally biased toward basic and acidic residues: residues 255–268 and 275–286; these read VSDF…RSEI and STEKENEEEKGP. Serine 336 is modified (phosphoserine). The segment at 405 to 571 is interaction with HD; sequence TRKESEKVDR…LQIHVMDCII (167 aa). Residues 406–514 are interaction with MYO6; that stretch reads RKESEKVDRA…RQSLMEMQSR (109 aa). The short motif at 468-473 is the UBAN element; that stretch reads DFHAER. Phosphoserine is present on serine 520. The segment at 541-571 adopts a CCHC NOA-type zinc-finger fold; it reads QRNIPIHSCPKCGEVLPDIDTLQIHVMDCII. Cysteine 549, cysteine 552, histidine 565, and cysteine 569 together coordinate Zn(2+).

Self-associates. Interacts with HD. Interacts with GTF3A. Interacts with MYO6. Interacts (via UBAN) with ubiquitinated TFRC. Interacts with GTP-bound Rab8 (RAB8A and/or RAB8B). Interacts with TBC1D17. Interacts with TBK1. Interacts with TRAF3. Binds to linear ubiquitin chains. Interacts with LC3 family members MAP1LC3A, MAP1LC3B, GABARAP, GABARAPL1 and GABARAPL2; OPTN phosphorylation increases the association (at least with MAP1LC3B). Interacts with RAB12; the interaction may be indirect. Interacts with TBK1; this interaction leads to the Golgi localization of TBK1 and its subsequent activation. Interacts with palmitoyltransferase ZDHHC17/HIP14; the interaction does not lead to palmitoylation of OPTN. Interacts with CYLD. Interacts with TOM1; the interaction is indirect and is mediated by MYO6, which acts as a bridge between TOM1 and OPTN. Interacts with USP12; the interaction is independent of USP12 deubiquitinase activity and may be involved in regulation of autophagic flux. In terms of processing, phosphorylated by TBK1, leading to restrict bacterial proliferation in case of infection.

The protein localises to the cytoplasm. The protein resides in the perinuclear region. It is found in the golgi apparatus. Its subcellular location is the trans-Golgi network. It localises to the cytoplasmic vesicle. The protein localises to the autophagosome. The protein resides in the recycling endosome. Plays an important role in the maintenance of the Golgi complex, in membrane trafficking, in exocytosis, through its interaction with myosin VI and Rab8. Links myosin VI to the Golgi complex and plays an important role in Golgi ribbon formation. Negatively regulates the induction of IFNB in response to RNA virus infection. Plays a neuroprotective role in the eye and optic nerve. Probably part of the TNF-alpha signaling pathway that can shift the equilibrium toward induction of cell death. May act by regulating membrane trafficking and cellular morphogenesis via a complex that contains Rab8 and huntingtin (HD). Mediates the interaction of Rab8 with the probable GTPase-activating protein TBC1D17 during Rab8-mediated endocytic trafficking, such as that of transferrin receptor (TFRC/TfR); regulates Rab8 recruitment to tubules emanating from the endocytic recycling compartment. Autophagy receptor that interacts directly with both the cargo to become degraded and an autophagy modifier of the MAP1 LC3 family; targets ubiquitin-coated bacteria (xenophagy) and appears to function in the same pathway as SQSTM1 and CALCOCO2/NDP52. This chain is Optineurin (OPTN), found in Macaca fascicularis (Crab-eating macaque).